We begin with the raw amino-acid sequence, 292 residues long: Ribosomal RNA small subunit methyltransferase A (292 aa).

S-adenosyl-L-methionine-binding residues include N28, L30, G55, E76, D101, and N126.

It belongs to the class I-like SAM-binding methyltransferase superfamily. rRNA adenine N(6)-methyltransferase family. RsmA subfamily.

The protein resides in the cytoplasm. The enzyme catalyses adenosine(1518)/adenosine(1519) in 16S rRNA + 4 S-adenosyl-L-methionine = N(6)-dimethyladenosine(1518)/N(6)-dimethyladenosine(1519) in 16S rRNA + 4 S-adenosyl-L-homocysteine + 4 H(+). Specifically dimethylates two adjacent adenosines (A1518 and A1519) in the loop of a conserved hairpin near the 3'-end of 16S rRNA in the 30S particle. May play a critical role in biogenesis of 30S subunits. The polypeptide is Ribosomal RNA small subunit methyltransferase A (Bacillus mycoides (strain KBAB4) (Bacillus weihenstephanensis)).